A 321-amino-acid polypeptide reads, in one-letter code: Ribose-phosphate pyrophosphokinase (321 aa).

ATP-binding positions include 44–46 (DGE) and 103–104 (RQ). Mg(2+) contacts are provided by His137 and Asp179. Lys202 is an active-site residue. D-ribose 5-phosphate-binding positions include Arg204, Asp228, and 232-236 (DTAGT).

It belongs to the ribose-phosphate pyrophosphokinase family. Class I subfamily. As to quaternary structure, homohexamer. Requires Mg(2+) as cofactor.

The protein localises to the cytoplasm. The enzyme catalyses D-ribose 5-phosphate + ATP = 5-phospho-alpha-D-ribose 1-diphosphate + AMP + H(+). It participates in metabolic intermediate biosynthesis; 5-phospho-alpha-D-ribose 1-diphosphate biosynthesis; 5-phospho-alpha-D-ribose 1-diphosphate from D-ribose 5-phosphate (route I): step 1/1. Functionally, involved in the biosynthesis of the central metabolite phospho-alpha-D-ribosyl-1-pyrophosphate (PRPP) via the transfer of pyrophosphoryl group from ATP to 1-hydroxyl of ribose-5-phosphate (Rib-5-P). This Staphylococcus haemolyticus (strain JCSC1435) protein is Ribose-phosphate pyrophosphokinase.